The sequence spans 217 residues: Growth factor receptor-bound protein 2 (217 aa).

Met1 is modified (N-acetylmethionine). The 58-residue stretch at 1 to 58 (MEAIAKYDFKATADDELSFKRGDILKVLNEECDQNWYKAELNGKDGFIPKNYIEMKPH) folds into the SH3 1 domain. 3 positions are modified to N6-acetyllysine: Lys6, Lys50, and Lys109. The SH2 domain occupies 60 to 152 (WFFGKIPRAK…NQQIFLRDIE (93 aa)). Lys109 is covalently cross-linked (Glycyl lysine isopeptide (Lys-Gly) (interchain with G-Cter in ubiquitin)). The 60-residue stretch at 156-215 (QQPTYVQALFDFDPQEDGELGFRRGDFIHVMDNSDPNWWKGACHGQTGMFPRNYVTPVNR) folds into the SH3 2 domain. Residue Tyr209 is modified to Phosphotyrosine. Thr211 bears the Phosphothreonine mark.

Belongs to the GRB2/sem-5/DRK family. Homodimer. Associates (via SH2 domain) with activated EGF and PDGF receptors (tyrosine phosphorylated). Interacts with PDGFRA (tyrosine phosphorylated); the interaction may be indirect. Also associates to other cellular Tyr-phosphorylated proteins such as SIT1, IRS1, IRS2, IRS4, SHC and LNK; probably via the concerted action of both its SH2 and SH3 domains. It also seems to interact with RAS in the signaling pathway leading to DNA synthesis. Interacts with SOS1. Forms a complex with MUC1 and SOS1, through interaction of the SH3 domains with SOS1 and the SH2 domain with phosphorylated MUC1. Interacts with phosphorylated MET. Interacts with phosphorylated TOM1L1. Interacts with the phosphorylated C-terminus of SH2B2. Interacts with phosphorylated SIT1, LAX1, LAT, LAT2 and LIME1 upon TCR and/or BCR activation. Interacts with NISCH, PTPNS1 and REPS2. Interacts with syntrophin SNTA1. Interacts (via SH3 domains) with REPS1. Interacts (via SH3 domains) with PIK3C2B. Interacts with CBL and CBLB. Interacts with AJUBA and CLNK. Interacts (via SH2 domain) with TEK/TIE2 (tyrosine phosphorylated). Interacts with SHB, INPP5D/SHIP1, SKAP1 and SKAP2. Interacts with PTPN11. Interacts with PRNP. Interacts with RALGPS1. Interacts with HCST. Interacts with KDR. Interacts with FLT1 (tyrosine-phosphorylated). Interacts with GAPT and PTPRE. Interacts (via SH2 domain) with KIF26A. Interacts (via SH3 2) with GAB2. Interacts with ADAM15. Interacts with THEMIS2. Interacts (via SH2 domain) with AXL (phosphorylated). Interacts (via SH2 domain) with KIT (phosphorylated). Interacts with PTPRJ and BCR. Interacts with PTPN23. Interacts with FLT4 (tyrosine phosphorylated). Interacts with EPHB1 and SHC1; activates the MAPK/ERK cascade to regulate cell migration. Part of a complex including TNK2, GRB2, LTK and one receptor tyrosine kinase (RTK) such as AXL and PDGFRL, in which GRB2 promotes RTK recruitment by TNK2. Interacts (via SH2 domain) with CSF1R (tyrosine phosphorylated). Interacts with ERBB4. Interacts with NTRK1 (phosphorylated upon ligand-binding). Interacts with PTK2/FAK1 (tyrosine phosphorylated). Interacts with PTK2B/PYK2 (tyrosine phosphorylated). Interacts (via SH3 domains) with GAREM1 isoform 1 (via proline-rich domain and tyrosine phosphorylated); the interaction occurs upon EGF stimulation. Interacts with DAB2. Interacts with TESPA1. Interacts with PLCG1, LAT and THEMIS upon TCR activation in thymocytes; the association is weaker in the absence of TESPA1. Interacts with CD28. Interacts with RAB13; may recruit RAB13 to the leading edge of migrating endothelial cells where it can activate RHOA. Interacts with ASAP3 (phosphorylated form). Interacts (via SH2 domain) with PTPRH (phosphorylated form). Interacts with PTPRO (phosphorylated form). Interacts with PTPRB (phosphorylated form). Interacts (via SH3 domain 2) with PRR14 (via proline-rich region). Interacts with FCRL6 (tyrosine phosphorylated form). Interacts with RHEX (via tyrosine-phosphorylated form). Interacts with DENND2B. Interacts with SPRY2. Interacts with LRRC8A. Interacts with PEAK1. Interacts with CD28. Interacts with FCRL1. Interacts with PCNA. Interacts with CD19. Interacts with BECN1. Interacts with RAD51; the interaction inhibits RAD51 ATPase to stabilize RAD51-DNA complex at stalled replication forks. Interacts with MRE11; this interaction recruits MRE11 to the DNA damage sites. Interacts with RIPK1 ans SQSTM1; these interactions play a critical role in regulating programmed necrosis. Interacts with AGO2; this interaction is important for the formation of a ternary complex containing GRB2, AGO2 and DICER1. Interacts with TIGIT; this interaction inhibits PI3K and MAPK signaling cascades. Interacts with CD226; this interaction leads to activation of VAV1, PI3K and PLCG1. As to quaternary structure, interacts (via SH2-domain) with SCIMP; this interaction is dependent on phosphorylation of SCIMP 'Tyr-69'. In terms of assembly, interacts with SOS1; this interaction competes with GRB2 to bind SOS1 via its N-terminal SH3 domain. (Microbial infection) Interacts (via SH3 domain) with hepatitis E virus/HEV ORF3 protein. As to quaternary structure, (Microbial infection) Interacts with hepatitis C virus/HCV protein NS5A via its SH3 domains. In terms of assembly, (Microbial infection) Interacts with herpes simplex virus 1 protein UL46. (Microbial infection) Interacts with B19 parvovirus protein 11K. Phosphorylation of Tyr-209 in the C-terminal SH3 domain reduces its binding to SOS1. Post-translationally, ubiquitinated by RNF173, leading to proteasomal degradation and inhibition of the RAF/MEK/ERK pathway. In the nucleus, polyubiquitinated by RBBP6 at Lys-109 at DNA damage sites.

It localises to the nucleus. The protein localises to the cytoplasm. It is found in the endosome. Its subcellular location is the golgi apparatus. Its function is as follows. Non-enzymatic adapter protein that plays a pivotal role in precisely regulated signaling cascades from cell surface receptors to cellular responses, including signaling transduction and gene expression. Thus, participates in many biological processes including regulation of innate and adaptive immunity, autophagy, DNA repair or necroptosis. Controls signaling complexes at the T-cell antigen receptor to facilitate the activation, differentiation, and function of T-cells. Mechanistically, engagement of the TCR leads to phosphorylation of the adapter protein LAT, which serves as docking site for GRB2. In turn, GRB2 establishes a a connection with SOS1 that acts as a guanine nucleotide exchange factor and serves as a critical regulator of KRAS/RAF1 leading to MAPKs translocation to the nucleus and activation. Functions also a role in B-cell activation by amplifying Ca(2+) mobilization and activation of the ERK MAP kinase pathway upon recruitment to the phosphorylated B-cell antigen receptor (BCR). Plays a role in switching between autophagy and programmed necrosis upstream of EGFR by interacting with components of necrosomes including RIPK1 and with autophagy regulators SQSTM1 and BECN1. Regulates miRNA biogenesis by forming a functional ternary complex with AGO2 and DICER1. Functions in the replication stress response by protecting DNA at stalled replication forks from MRE11-mediated degradation. Mechanistically, inhibits RAD51 ATPase activity to stabilize RAD51 on stalled replication forks. Additionally, directly recruits and later releases MRE11 at DNA damage sites during the homology-directed repair (HDR) process. Does not bind to phosphorylated epidermal growth factor receptor (EGFR) but inhibits EGF-induced transactivation of a RAS-responsive element. Acts as a dominant negative protein over GRB2 and by suppressing proliferative signals, may trigger active programmed cell death. Mechanistically, inhibits RAS-ERK signaling and downstream cell proliferation by competing with GRB2 for SOS1 binding and thus by regulating SOS1 membrane recruitment. This chain is Growth factor receptor-bound protein 2 (GRB2), found in Homo sapiens (Human).